The sequence spans 287 residues: Ribosomal RNA small subunit methyltransferase I (287 aa).

The protein belongs to the methyltransferase superfamily. RsmI family.

It is found in the cytoplasm. It catalyses the reaction cytidine(1402) in 16S rRNA + S-adenosyl-L-methionine = 2'-O-methylcytidine(1402) in 16S rRNA + S-adenosyl-L-homocysteine + H(+). Functionally, catalyzes the 2'-O-methylation of the ribose of cytidine 1402 (C1402) in 16S rRNA. This is Ribosomal RNA small subunit methyltransferase I from Helicobacter pylori (strain ATCC 700392 / 26695) (Campylobacter pylori).